The following is a 534-amino-acid chain: Replication factor C large subunit (534 aa).

45–52 (GPPGIGKT) provides a ligand contact to ATP. Residues 444-463 (KNKKEIKVKTKKDTVEDSSK) show a composition bias toward basic and acidic residues. Residues 444 to 534 (KNKKEIKVKT…KSRQTTLFDF (91 aa)) form a disordered region. A compositionally biased stretch (low complexity) spans 488–510 (SSNSTTKNKTESPKNSSKTSSKT). Positions 517–527 (TSKKNNKKKSR) are enriched in basic residues.

The protein belongs to the activator 1 small subunits family. RfcL subfamily. Heteromultimer composed of small subunits (RfcS) and large subunits (RfcL).

Its function is as follows. Part of the RFC clamp loader complex which loads the PCNA sliding clamp onto DNA. This chain is Replication factor C large subunit, found in Methanosphaera stadtmanae (strain ATCC 43021 / DSM 3091 / JCM 11832 / MCB-3).